A 104-amino-acid chain; its full sequence is Pyrimidine/purine nucleoside phosphorylase (104 aa).

The protein belongs to the nucleoside phosphorylase PpnP family.

It carries out the reaction a purine D-ribonucleoside + phosphate = a purine nucleobase + alpha-D-ribose 1-phosphate. The catalysed reaction is adenosine + phosphate = alpha-D-ribose 1-phosphate + adenine. The enzyme catalyses cytidine + phosphate = cytosine + alpha-D-ribose 1-phosphate. It catalyses the reaction guanosine + phosphate = alpha-D-ribose 1-phosphate + guanine. It carries out the reaction inosine + phosphate = alpha-D-ribose 1-phosphate + hypoxanthine. The catalysed reaction is thymidine + phosphate = 2-deoxy-alpha-D-ribose 1-phosphate + thymine. The enzyme catalyses uridine + phosphate = alpha-D-ribose 1-phosphate + uracil. It catalyses the reaction xanthosine + phosphate = alpha-D-ribose 1-phosphate + xanthine. In terms of biological role, catalyzes the phosphorolysis of diverse nucleosides, yielding D-ribose 1-phosphate and the respective free bases. Can use uridine, adenosine, guanosine, cytidine, thymidine, inosine and xanthosine as substrates. Also catalyzes the reverse reactions. This Leptothrix cholodnii (strain ATCC 51168 / LMG 8142 / SP-6) (Leptothrix discophora (strain SP-6)) protein is Pyrimidine/purine nucleoside phosphorylase.